A 363-amino-acid polypeptide reads, in one-letter code: UDP-N-acetylglucosamine--N-acetylmuramyl-(pentapeptide) pyrophosphoryl-undecaprenol N-acetylglucosamine transferase (363 aa).

Residues 10–12 (TGG), Asn124, Ser195, and Gln295 each bind UDP-N-acetyl-alpha-D-glucosamine.

Belongs to the glycosyltransferase 28 family. MurG subfamily.

The protein resides in the cell membrane. The enzyme catalyses di-trans,octa-cis-undecaprenyl diphospho-N-acetyl-alpha-D-muramoyl-L-alanyl-D-glutamyl-meso-2,6-diaminopimeloyl-D-alanyl-D-alanine + UDP-N-acetyl-alpha-D-glucosamine = di-trans,octa-cis-undecaprenyl diphospho-[N-acetyl-alpha-D-glucosaminyl-(1-&gt;4)]-N-acetyl-alpha-D-muramoyl-L-alanyl-D-glutamyl-meso-2,6-diaminopimeloyl-D-alanyl-D-alanine + UDP + H(+). Its pathway is cell wall biogenesis; peptidoglycan biosynthesis. Cell wall formation. Catalyzes the transfer of a GlcNAc subunit on undecaprenyl-pyrophosphoryl-MurNAc-pentapeptide (lipid intermediate I) to form undecaprenyl-pyrophosphoryl-MurNAc-(pentapeptide)GlcNAc (lipid intermediate II). The chain is UDP-N-acetylglucosamine--N-acetylmuramyl-(pentapeptide) pyrophosphoryl-undecaprenol N-acetylglucosamine transferase from Bacillus subtilis (strain 168).